The primary structure comprises 326 residues: Tagatose 1,6-diphosphate aldolase (326 aa).

Belongs to the aldolase LacD family.

The enzyme catalyses D-tagatofuranose 1,6-bisphosphate = D-glyceraldehyde 3-phosphate + dihydroxyacetone phosphate. It functions in the pathway carbohydrate metabolism; D-tagatose 6-phosphate degradation; D-glyceraldehyde 3-phosphate and glycerone phosphate from D-tagatose 6-phosphate: step 2/2. The protein is Tagatose 1,6-diphosphate aldolase of Staphylococcus aureus (strain bovine RF122 / ET3-1).